The sequence spans 388 residues: Ribonuclease D (388 aa).

The region spanning 24–191 (QYVSDEASLN…LYPQLADKLK (168 aa)) is the 3'-5' exonuclease domain. One can recognise an HRDC domain in the interval 230 to 310 (TEHQLAYLKV…QTADLSNPPE (81 aa)).

Belongs to the RNase D family. Requires a divalent metal cation as cofactor.

The protein resides in the cytoplasm. The catalysed reaction is Exonucleolytic cleavage that removes extra residues from the 3'-terminus of tRNA to produce 5'-mononucleotides.. In terms of biological role, exonuclease involved in the 3' processing of various precursor tRNAs. Initiates hydrolysis at the 3'-terminus of an RNA molecule and releases 5'-mononucleotides. This Shewanella sp. (strain ANA-3) protein is Ribonuclease D.